The sequence spans 1296 residues: MSNDSSLGLMQIGLATADQIRGWSYGEVKKPETINYRTLKPEKDGLFCEKIFGPTRDWECYCGKYKRVRYKGIICERCGVEVTRAKVRRERMGHIELAAPVTHIWYFKGVPSRLGYLLDLAPKDLEKVIYFAAYMITSVDEQARHDDLPNLQAAIDREKKQLEDTRDADINAIARDLENDLARVEEEGGKAAEKRKLRDSADRQMANVRKRADREIDYLEKVWDRFKNLKVNDLEGDEALYRQMVDRYGMYFEGSMGAESIKKRLETFDLAAEAEALRETIATGKGQRKTRALKRLKVVNAFLTTDNSPLGMVLDAVPVIPPELRPMVQLDGGRFATSDLNDLYRRVINRNNRLKRLLDLGAPEIIVNNEKRMLQEAVDSLFDNGRRGRPVTGPGNRALKSLSDMLKGKQGRFRQNLLGKRVDYSGRSVIVVGPQLKLHQCGLPKQMALELFKPFVMKRLVDLNHAQNIKSAKRMVERYRPQVWDVLEEVITEHPVLLNRAPTLHRLGIQAFEPQLVEGKAIQLHPLVCGAFNADFDGDQMAVHLPLSPEAQAEARVLMLSSNNILKPSDGKPIALPSQDMIIGLYHLTTVREGWAGEGNTYSSVAEAIMANDSGELHLNAKCKIRLEDFVPYAGWEAPEGWEPGQPAVVETTLGRVLFNETLPEDYPWDENVADKKHLSALVNDLAERYPMTRVAKTLDNLKDAGFHWASRSGVTVAISDIATPPEKPAIMEGYEAQAARIQGQYDKGLIDDDERRSELIDIWSKATDEVAQAMRDNLEPTNTINRMVSSGARGNWMQVRQIAGIRGLVANPKGEIMPRPIKSSYREGLSVLEYFIATHGARKGLADTALRTANSGYLTRRLVDVSQDVIVRESDCQTVRGLTLPLSDITDTGVRTLSEDVENTVHGRVLASAVADENGEVLAEAGADMSDAMIEKLYAAGVDQVRVRSVLTCESAVGVCAACYGRSLATNQLVDIGEAVGIVAAQSIGEPGTQLTMRTFHTGGVASSDGDITQGLPRIQELFEARTPKGVAPISEVAGRIRIEDTDKSLKIVVVPDNGDEEFAYPVLRRAKLLVADGDHVDVGQQLVTGAVDPKEVLRIRGPREAQKHLVDEVQGVYRSQGVGIHDKHVEVIVRQMLRRVTIIESGDTSLLPGELVDNVRFLEANRGAVAEGKRPAAGRPELMGITKASLATDSWLSAASFQETTRVLTQAAMEGKSDPLLGLKENVIIGKLIPAGTGLDRYNSVDVEPTEEAKAQMFTDPSAFADFSYAEENAGGLGSEFQAIPLDDYDFGGN.

The Zn(2+) site is built by Cys-60, Cys-62, Cys-75, and Cys-78. The segment covering Glu-185–Asp-202 has biased composition (basic and acidic residues). The tract at residues Glu-185–Gln-204 is disordered. Mg(2+) contacts are provided by Asp-535, Asp-537, and Asp-539. Cys-877, Cys-954, Cys-961, and Cys-964 together coordinate Zn(2+).

It belongs to the RNA polymerase beta' chain family. In terms of assembly, the RNAP catalytic core consists of 2 alpha, 1 beta, 1 beta' and 1 omega subunit. When a sigma factor is associated with the core the holoenzyme is formed, which can initiate transcription. It depends on Mg(2+) as a cofactor. Zn(2+) serves as cofactor.

It catalyses the reaction RNA(n) + a ribonucleoside 5'-triphosphate = RNA(n+1) + diphosphate. Functionally, DNA-dependent RNA polymerase catalyzes the transcription of DNA into RNA using the four ribonucleoside triphosphates as substrates. The chain is DNA-directed RNA polymerase subunit beta' from Kocuria rhizophila (strain ATCC 9341 / DSM 348 / NBRC 103217 / DC2201).